Reading from the N-terminus, the 479-residue chain is MPEVPWVEKYRPRRLSEIINQEDAISKVKAWIEAWLHGNPPKKKALLLAGPPGSGKTTTVYALAREYNFEVIELNASDERTYDKIARYVQAAYTMDILGKRRKIIFLDEADNIEPSGAPEIAKLIDRARNPIIMAANHYWEVPKEIRDRAELVEYKRLTQRDVINALVRILKREGITVPKEVLVEIAKRASGDLRAAINDLQTVVAGGYEDARYVLAYRDVEKTVFQALGLVFASDNAKRAKLAMMNLDMSPDEFLLWIDENIPHMYLKPEEMARAYEAISKADIYLGRAQRTGNYSLWRYAIDMMTAGVAVAGTKKRGFAKFYPPNTLKMLAESKEERSTRNSIIKKIMSEMHMSKLEAIETMKIIKTIFEKNLDLAAHFTVFLGLSEKEVEFLAGRENAGTIWGKALAIRRKLKKEEEKIRKERKEEEKVEVREEKPEEKVEEKREERETKKEKEKKEEKKAEKKGKQVTLFDFIKK.

50–57 (GPPGSGKT) lines the ATP pocket. A compositionally biased stretch (basic and acidic residues) spans 420 to 468 (EKIRKERKEEEKVEVREEKPEEKVEEKREERETKKEKEKKEEKKAEKKG). The interval 420–479 (EKIRKERKEEEKVEVREEKPEEKVEEKREERETKKEKEKKEEKKAEKKGKQVTLFDFIKK) is disordered.

This sequence belongs to the activator 1 small subunits family. RfcL subfamily. As to quaternary structure, heterohexamer composed of four small subunits (RfcS) and two large subunits (RfcL).

Its function is as follows. Part of the RFC clamp loader complex which loads the PCNA sliding clamp onto DNA. The complex possesses DNA-independent ATPase activity. The protein is Replication factor C large subunit (rfcL) of Pyrococcus abyssi (strain GE5 / Orsay).